The chain runs to 320 residues: GMP reductase (320 aa).

C174 (thioimidate intermediate) is an active-site residue. 203 to 226 is an NADP(+) binding site; sequence IIADGGLRVHGDIAKSIRMGASFC.

It belongs to the IMPDH/GMPR family. GuaC type 2 subfamily.

It catalyses the reaction IMP + NH4(+) + NADP(+) = GMP + NADPH + 2 H(+). In terms of biological role, catalyzes the irreversible NADPH-dependent deamination of GMP to IMP. It functions in the conversion of nucleobase, nucleoside and nucleotide derivatives of G to A nucleotides, and in maintaining the intracellular balance of A and G nucleotides. The sequence is that of GMP reductase from Mycoplasma mycoides subsp. mycoides SC (strain CCUG 32753 / NCTC 10114 / PG1).